The primary structure comprises 86 residues: Anti-adapter protein IraP (86 aa).

Positions 1-38 form a coiled coil; it reads MKNLIAELLVKLAQKEEEAKELTVQVEALEIVVTALLR.

This sequence belongs to the IraP family. Interacts with RssB.

It is found in the cytoplasm. Its function is as follows. Inhibits RpoS proteolysis by regulating RssB activity, thereby increasing the stability of the sigma stress factor RpoS especially during phosphate starvation, but also in stationary phase and during nitrogen starvation. Its effect on RpoS stability is due to its interaction with RssB, which probably blocks the interaction of RssB with RpoS, and the consequent delivery of the RssB-RpoS complex to the ClpXP protein degradation pathway. This is Anti-adapter protein IraP from Klebsiella pneumoniae subsp. pneumoniae (strain ATCC 700721 / MGH 78578).